Reading from the N-terminus, the 446-residue chain is Probable glucuronosyltransferase Os04g0650300 (446 aa).

Topologically, residues 1 to 30 (MKLPLLRPLWPMLSPAAGSPDSPPEPSKPS) are cytoplasmic. A helical; Signal-anchor for type II membrane protein transmembrane segment spans residues 31-51 (LPAAWLLLHALFCATSMAVGF). The Lumenal portion of the chain corresponds to 52–446 (RFSRLIVYLL…TTLLNTEGQH (395 aa)). N87 carries N-linked (GlcNAc...) asparagine glycosylation. The interval 425 to 446 (QQDAKPETPLKRTTLLNTEGQH) is disordered.

Belongs to the glycosyltransferase 43 family.

It is found in the golgi apparatus membrane. Involved in the synthesis of glucuronoxylan hemicellulose in secondary cell walls. This chain is Probable glucuronosyltransferase Os04g0650300, found in Oryza sativa subsp. japonica (Rice).